The primary structure comprises 604 residues: Testis-expressed protein 13C-1 (604 aa).

Disordered stretches follow at residues 314-337 (EGEG…SHKD), 374-397 (PVMP…RPKI), 485-523 (CLNA…HPRK), and 538-580 (ATKQ…SANC). Polar residues predominate over residues 322 to 333 (QGTSLHGDSSNN). The span at 544–572 (KQPEGIKSLESKQPQETKSSESKQQEKPL) shows a compositional bias: basic and acidic residues.

Belongs to the TEX13 family.

Plays a role in transcriptional repression. The polypeptide is Testis-expressed protein 13C-1 (Mus musculus (Mouse)).